The following is a 204-amino-acid chain: Small ribosomal subunit protein uS4c (204 aa).

The region spanning 90 to 150 is the S4 RNA-binding domain; it reads MRLDNILYRL…GKKTDQLKTI (61 aa).

The protein belongs to the universal ribosomal protein uS4 family. In terms of assembly, part of the 30S ribosomal subunit. Contacts protein S5. The interaction surface between S4 and S5 is involved in control of translational fidelity.

The protein resides in the plastid. The protein localises to the chloroplast. In terms of biological role, one of the primary rRNA binding proteins, it binds directly to 16S rRNA where it nucleates assembly of the body of the 30S subunit. Functionally, with S5 and S12 plays an important role in translational accuracy. The chain is Small ribosomal subunit protein uS4c (rps4) from Gnetum parvifolium (Small-leaved jointfir).